Here is a 1185-residue protein sequence, read N- to C-terminus: Ovostatin homolog 1 (1185 aa).

The first 21 residues, 1–21, serve as a signal peptide directing secretion; the sequence is MHVHVCVCLCVCIYTSSCVCA. Asn80, Asn155, Asn347, Asn452, and Asn725 each carry an N-linked (GlcNAc...) asparagine glycan.

The protein belongs to the protease inhibitor I39 (alpha-2-macroglobulin) family. As to quaternary structure, homotetramer.

The protein localises to the secreted. In terms of biological role, is able to inhibit all four classes of proteinases by a unique 'trapping' mechanism. The sequence is that of Ovostatin homolog 1 (OVOS1) from Homo sapiens (Human).